Reading from the N-terminus, the 405-residue chain is Maintenance of mitochondrial morphology protein 1 (405 aa).

The Lumenal portion of the chain corresponds to 1–86; it reads MQVLNFYVNP…TGSTKSFTQG (86 aa). Residues 87 to 107 traverse the membrane as a helical segment; it reads LIIGQLSVIILLGIFIKFFVF. Residues 108 to 405 lie on the Cytoplasmic side of the membrane; that stretch reads ADSSTTSSTS…QPVSTTESDH (298 aa). An SMP-LTD domain is found at 166–385; sequence APESLDWFNV…EPRFQVVKLP (220 aa). Positions 303–324 are disordered; the sequence is SEPRVAMDSPQSTRDDNSEEPN.

Belongs to the MMM1 family. In terms of assembly, homodimer. Component of the ER-mitochondria encounter structure (ERMES) or MDM complex, composed of MMM1, MDM10, MDM12 and MDM34. An MMM1 homodimer associates with one molecule of MDM12 on each side in a pairwise head-to-tail manner, and the SMP-LTD domains of MMM1 and MDM12 generate a continuous hydrophobic tunnel for phospholipid trafficking.

Its subcellular location is the endoplasmic reticulum membrane. In terms of biological role, component of the ERMES/MDM complex, which serves as a molecular tether to connect the endoplasmic reticulum (ER) and mitochondria. Components of this complex are involved in the control of mitochondrial shape and protein biogenesis, and function in nonvesicular lipid trafficking between the ER and mitochondria. The MDM12-MMM1 subcomplex functions in the major beta-barrel assembly pathway that is responsible for biogenesis of all outer membrane beta-barrel proteins, and acts in a late step after the SAM complex. The MDM10-MDM12-MMM1 subcomplex further acts in the TOM40-specific pathway after the action of the MDM12-MMM1 complex. Essential for establishing and maintaining the structure of mitochondria and maintenance of mtDNA nucleoids. The protein is Maintenance of mitochondrial morphology protein 1 of Meyerozyma guilliermondii (strain ATCC 6260 / CBS 566 / DSM 6381 / JCM 1539 / NBRC 10279 / NRRL Y-324) (Yeast).